A 298-amino-acid polypeptide reads, in one-letter code: MFRKFLFIQLLIVTSLVKAEIIEVDSLNKITQDFKVNYNKNYLPQDLLVVTVLDKFLFKSFGVPIGEYIDQHRYLALAPLFSHINKNPKIIYITQLILTNNSYKKELQESDFPNFVNEMSNSQIPIIAVNNGFTGNFNNIPKFEIWFADYLKKNFYIDFSKSFPNNNYIIFNNLDSFDNTYPVFYKGILTSNNIPASKVILNFLIQINFIPKCFILISSSRELLRSMEFQLNNYSSNILFIGYHYNNKSISDDKDYKDIAYYTKMINDLIPQINKLKRNNPPLKNNNAKSKNSYETYK.

The N-terminal stretch at 1–19 (MFRKFLFIQLLIVTSLVKA) is a signal peptide. Positions 278–298 (RNNPPLKNNNAKSKNSYETYK) are disordered. A compositionally biased stretch (low complexity) spans 279-298 (NNPPLKNNNAKSKNSYETYK).

This sequence to R.prowazekii RP296.

This is an uncharacterized protein from Rickettsia prowazekii (strain Madrid E).